Here is a 463-residue protein sequence, read N- to C-terminus: ATP synthase subunit beta (463 aa).

An ATP-binding site is contributed by 152-159 (GGAGVGKT).

It belongs to the ATPase alpha/beta chains family. F-type ATPases have 2 components, CF(1) - the catalytic core - and CF(0) - the membrane proton channel. CF(1) has five subunits: alpha(3), beta(3), gamma(1), delta(1), epsilon(1). CF(0) has three main subunits: a(1), b(2) and c(9-12). The alpha and beta chains form an alternating ring which encloses part of the gamma chain. CF(1) is attached to CF(0) by a central stalk formed by the gamma and epsilon chains, while a peripheral stalk is formed by the delta and b chains.

It is found in the cell membrane. The catalysed reaction is ATP + H2O + 4 H(+)(in) = ADP + phosphate + 5 H(+)(out). Functionally, produces ATP from ADP in the presence of a proton gradient across the membrane. The catalytic sites are hosted primarily by the beta subunits. The protein is ATP synthase subunit beta of Clostridium botulinum (strain Alaska E43 / Type E3).